A 511-amino-acid chain; its full sequence is DEP domain-containing protein 7 (511 aa).

Residues 46-136 form the DEP domain; it reads LQTQVEVKKR…SSCSLYRFTT (91 aa).

This sequence belongs to the DEPDC7 family. In terms of tissue distribution, expressed in liver.

The polypeptide is DEP domain-containing protein 7 (DEPDC7) (Homo sapiens (Human)).